Reading from the N-terminus, the 461-residue chain is D-phenylhydantoinase (461 aa).

His-59, His-61, and Lys-151 together coordinate a divalent metal cation. Lys-151 carries the post-translational modification N6-carboxylysine. Position 156 (Tyr-156) interacts with substrate. The a divalent metal cation site is built by His-182 and His-239. Ser-286 is a binding site for substrate. Asp-313 contacts a divalent metal cation. A substrate-binding site is contributed by Asn-335.

It belongs to the metallo-dependent hydrolases superfamily. Hydantoinase/dihydropyrimidinase family. As to quaternary structure, homotetramer. The cofactor is a divalent metal cation. Post-translationally, carboxylation allows a single lysine to coordinate two divalent metal cations.

The catalysed reaction is D-5-phenylhydantoin + H2O = N-carbamoyl-D-phenylglycine + H(+). In terms of biological role, catalyzes the stereospecific hydrolysis of the cyclic amide bond of D-hydantoin derivatives with an aromatic side chains at the 5'-position. Has no activity on dihydropyrimidines. The physiological function is unknown. In Escherichia coli (strain UTI89 / UPEC), this protein is D-phenylhydantoinase.